Here is a 210-residue protein sequence, read N- to C-terminus: MTFAEELQQILPPDLPHRDAVIASAARHLDLIVETNQHFNLTRIVSPREAAIKHIADSVIPWRLFSGAPHVVDAGSGAGFPGIPLALVLPETRFTLLESTQKKARFIESAAADLGLANVEVRPDRAEDWLKTHRASIVTARAVAPLTRAVGLFAHALRAGARILLYKGPDAEAEIAEAASEAAKRRVHLRVVERYELPDSLGARTIVEIR.

Residues Gly75, Phe80, 98–100 (EST), 126–127 (AE), and Arg141 each bind S-adenosyl-L-methionine.

This sequence belongs to the methyltransferase superfamily. RNA methyltransferase RsmG family.

Its subcellular location is the cytoplasm. Its function is as follows. Specifically methylates the N7 position of a guanine in 16S rRNA. This Solibacter usitatus (strain Ellin6076) protein is Ribosomal RNA small subunit methyltransferase G.